Consider the following 179-residue polypeptide: MDTNNTNNINSLENPIDLENDPNILFTELNVKLESLITFLTKNDKDNQIFVDEIIDNKVTDLLIASKELENYFISQQSKYSAEKNKIQLKQEIYKVKKEIENKDRLIERYKNKVKEWKYHFEPLYQSQNHILHSTAQGLSGIENQFSPVFTPMPNTPSILQNLSQAKPSPSLGLGSTIL.

Residues 81-119 (SAEKNKIQLKQEIYKVKKEIENKDRLIERYKNKVKEWKY) adopt a coiled-coil conformation.

This sequence belongs to the Mediator complex subunit 28 family. As to quaternary structure, component of the Mediator complex.

It localises to the nucleus. Component of the Mediator complex, a coactivator involved in the regulated transcription of nearly all RNA polymerase II-dependent genes. Mediator functions as a bridge to convey information from gene-specific regulatory proteins to the basal RNA polymerase II transcription machinery. Mediator is recruited to promoters by direct interactions with regulatory proteins and serves as a scaffold for the assembly of a functional preinitiation complex with RNA polymerase II and the general transcription factors. The polypeptide is Putative mediator of RNA polymerase II transcription subunit 28 (med28) (Dictyostelium discoideum (Social amoeba)).